The following is a 363-amino-acid chain: Phosphoserine aminotransferase (363 aa).

Residue R41 coordinates L-glutamate. Pyridoxal 5'-phosphate-binding positions include 75 to 76, W100, T155, D175, and Q198; that span reads AS. Position 199 is an N6-(pyridoxal phosphate)lysine (K199). 239–240 contacts pyridoxal 5'-phosphate; that stretch reads NT.

The protein belongs to the class-V pyridoxal-phosphate-dependent aminotransferase family. SerC subfamily. As to quaternary structure, homodimer. Pyridoxal 5'-phosphate is required as a cofactor.

Its subcellular location is the cytoplasm. It carries out the reaction O-phospho-L-serine + 2-oxoglutarate = 3-phosphooxypyruvate + L-glutamate. The enzyme catalyses 4-(phosphooxy)-L-threonine + 2-oxoglutarate = (R)-3-hydroxy-2-oxo-4-phosphooxybutanoate + L-glutamate. It participates in amino-acid biosynthesis; L-serine biosynthesis; L-serine from 3-phospho-D-glycerate: step 2/3. Catalyzes the reversible conversion of 3-phosphohydroxypyruvate to phosphoserine and of 3-hydroxy-2-oxo-4-phosphonooxybutanoate to phosphohydroxythreonine. The chain is Phosphoserine aminotransferase from Streptococcus agalactiae serotype III (strain NEM316).